A 407-amino-acid polypeptide reads, in one-letter code: MALSKISPTEGSRRILEDHHIDEDVGFALPHPLVELPDAYSPWVLVARNLPVLIENGQLREEVEKLPTLSTDGLRGHRLQRLAHLALGYITMAYVWNRGDDDVRKVLPRNIAVPYCELSEKLGLPPILSYADCVLANWKKKDPNGPMTYENMDILFSFPGGDCDKGFFLVSLLVEIAASPAIKAIPTVSSAVERQDLKALEKALHDIATSLEKAKEIFKRMRDFVDPDTFFHVLRIYLSGWKCSSKLPEGLLYEGVWDTPKMFSGGSAGQSSIFQSLDVLLGIKHEAGKESPAEFLQEMREYMPPAHRNFLFFLESAPPVREFVISRHNEDLTKAYNECVNGLVSVRKFHLAIVDTYIMKPSKKKPTDGDKSEEPSNVESRGTGGTNPMTFLRSVKDTTEKALLSWP.

Histidine 350 contributes to the heme b binding site. Residues 362-407 (SKKKPTDGDKSEEPSNVESRGTGGTNPMTFLRSVKDTTEKALLSWP) form a disordered region. Positions 365-374 (KPTDGDKSEE) are enriched in basic and acidic residues.

This sequence belongs to the indoleamine 2,3-dioxygenase family. As to quaternary structure, monomer. The cofactor is heme b. In terms of tissue distribution, highly expressed in epididymis, duodemum, jejunum, ileum, colon and spleen. Highly expressed in epididymis, prostate, duodemum, jejunum, ileum, colon and spleen, not detected in the liver (at protein level). Expressed in tumors only upon exposure to IFN gamma. Constitutively expressed in placenta in trophoblast cells. Expression is restricted to perinuclear regions of primary trophoblast giant cells (TGCs) of fetal origin at mid-gestation (10.5 dpc). After placentation (14 dpc), no IDO expression was detected at the maternal-fetal interface.

The protein resides in the cytoplasm. It localises to the cytosol. It catalyses the reaction D-tryptophan + O2 = N-formyl-D-kynurenine. The catalysed reaction is L-tryptophan + O2 = N-formyl-L-kynurenine. Its activity is regulated as follows. Activity is inhibited by and MTH-trp (methylthiohydantoin-DL-tryptophan), modestly inhibited by L-1MT (1-methyl-L-tryptophan) but not D-1MT (1-methyl-D-tryptophan). Catalyzes the first and rate limiting step of the catabolism of the essential amino acid tryptophan along the kynurenine pathway. Involved in the peripheral immune tolerance, contributing to maintain homeostasis by preventing autoimmunity or immunopathology that would result from uncontrolled and overreacting immune responses. Tryptophan shortage inhibits T lymphocytes division and accumulation of tryptophan catabolites induces T-cell apoptosis and differentiation of regulatory T-cells. Acts as a suppressor of anti-tumor immunity. Limits the growth of intracellular pathogens by depriving tryptophan. Protects the fetus from maternal immune rejection. The polypeptide is Indoleamine 2,3-dioxygenase 1 (Mus musculus (Mouse)).